A 92-amino-acid chain; its full sequence is Small ribosomal subunit protein uS19c (92 aa).

It belongs to the universal ribosomal protein uS19 family.

The protein localises to the plastid. Its subcellular location is the chloroplast. Functionally, protein S19 forms a complex with S13 that binds strongly to the 16S ribosomal RNA. The sequence is that of Small ribosomal subunit protein uS19c from Cucumis sativus (Cucumber).